Consider the following 527-residue polypeptide: Peptide chain release factor 3 (527 aa).

A tr-type G domain is found at Ala9 to Leu277. Residues Ser18 to Thr25, Asp86 to His90, and Asn140 to Asp143 contribute to the GTP site.

Belongs to the TRAFAC class translation factor GTPase superfamily. Classic translation factor GTPase family. PrfC subfamily.

It is found in the cytoplasm. Its function is as follows. Increases the formation of ribosomal termination complexes and stimulates activities of RF-1 and RF-2. It binds guanine nucleotides and has strong preference for UGA stop codons. It may interact directly with the ribosome. The stimulation of RF-1 and RF-2 is significantly reduced by GTP and GDP, but not by GMP. This Pseudomonas entomophila (strain L48) protein is Peptide chain release factor 3.